Consider the following 551-residue polypeptide: E3 ubiquitin-protein ligase TRIM8 (551 aa).

The RING-type zinc-finger motif lies at 15–56; sequence CPICLHVFVEPVQLPCKHNFCRGCIGEAWAKDSGLVRCPECN. 2 B box-type zinc fingers span residues 92–132 and 140–182; these read CVFC…ARGH and VRAW…VCDV. Positions 181-249 form a coiled coil; the sequence is DVEIRRNEIR…HQLLDEDLRQ (69 aa).

It belongs to the TRIM/RBCC family. Homodimer. Interacts with SOCS1 (via) SH2 domain and SOCS box. Interacts with HSP90AB1; prevents nucleus translocation of phosphorylated STAT3 and HSP90AB1. Interacts with MAP3K7/TAK1. Interacts with PIAS3. Interacts with TICAM1. Interacts with TRIM15; this interaction prevents TRIM8 cytoplasmic translocation. Widely expressed. Expressed in glomerular podocytes of kidneys.

The protein localises to the cytoplasm. It localises to the nucleus. Its subcellular location is the nuclear body. It catalyses the reaction S-ubiquitinyl-[E2 ubiquitin-conjugating enzyme]-L-cysteine + [acceptor protein]-L-lysine = [E2 ubiquitin-conjugating enzyme]-L-cysteine + N(6)-ubiquitinyl-[acceptor protein]-L-lysine.. It functions in the pathway protein modification; protein ubiquitination. Functionally, E3 ubiquitin-protein ligase that participates in multiple biological processes including cell survival, differentiation, apoptosis, and in particular, the innate immune response. Participates in the activation of interferon-gamma signaling by promoting proteasomal degradation of the repressor SOCS1. Plays a positive role in the TNFalpha and IL-1beta signaling pathways. Mechanistically, induces the 'Lys-63'-linked polyubiquitination of MAP3K7/TAK1 component leading to the activation of NF-kappa-B. Also modulates STAT3 activity through negative regulation of PIAS3, either by degradation of PIAS3 through the ubiquitin-proteasome pathway or exclusion of PIAS3 from the nucleus. Negatively regulates TLR3/4-mediated innate immune response by catalyzing 'Lys-6'- and 'Lys-33'-linked polyubiquitination of TICAM1 and thereby disrupting the TICAM1-TBK1 interaction. This chain is E3 ubiquitin-protein ligase TRIM8 (TRIM8), found in Homo sapiens (Human).